A 524-amino-acid chain; its full sequence is Leucine-rich repeat-containing protein 1 (524 aa).

17 LRR repeats span residues 11–34, 35–58, 60–81, 83–105, 107–126, 127–149, 150–172, 173–196, 198–218, 219–242, 244–264, 265–288, 290–310, 311–334, 336–356, 357–380, and 382–405; these read NRHV…IYRY, ARSL…FFQL, KLRK…IANF, QLVE…SFCK, LQVA…SFPE, LQNL…NIGN, LYNL…SLTQ, LRRL…IGAL, HLKD…EIGN, LKNL…ISGL, SLTD…GIGK, LKKL…VGEC, SLTE…SIGK, LKKL…IGGC, SLTV…EVSQ, ATEL…LTAL, and LKAL…TDYT. Position 480 is a phosphothreonine (T480). Residues 484–512 adopt a coiled-coil conformation; the sequence is GELKHMKKTVENLRNDMNAAKGLDSNKNE.

In terms of assembly, interacts with DLG1 and DLG4. May form a complex with DLG1 and ERBIN, where interaction between LRRC1 and ERBIN is indirect. In terms of tissue distribution, expressed strongly in testis and placenta, followed by heart, lung, kidney, thyroid, trachea, colon, prostate and pancreas.

The protein resides in the cytoplasm. It localises to the membrane. The protein is Leucine-rich repeat-containing protein 1 (LRRC1) of Homo sapiens (Human).